A 306-amino-acid polypeptide reads, in one-letter code: Acetyl-coenzyme A carboxylase carboxyl transferase subunit beta (306 aa).

The 270-residue stretch at 27–296 folds into the CoA carboxyltransferase N-terminal domain; sequence LWHKCPSCEA…PEFVAAPVEP (270 aa). Cys31, Cys34, Cys50, and Cys53 together coordinate Zn(2+). A C4-type zinc finger spans residues 31-53; sequence CPSCEAVLYRPELEKTLDVCPKC.

This sequence belongs to the AccD/PCCB family. Acetyl-CoA carboxylase is a heterohexamer composed of biotin carboxyl carrier protein (AccB), biotin carboxylase (AccC) and two subunits each of ACCase subunit alpha (AccA) and ACCase subunit beta (AccD). Zn(2+) serves as cofactor.

The protein localises to the cytoplasm. It catalyses the reaction N(6)-carboxybiotinyl-L-lysyl-[protein] + acetyl-CoA = N(6)-biotinyl-L-lysyl-[protein] + malonyl-CoA. It participates in lipid metabolism; malonyl-CoA biosynthesis; malonyl-CoA from acetyl-CoA: step 1/1. Component of the acetyl coenzyme A carboxylase (ACC) complex. Biotin carboxylase (BC) catalyzes the carboxylation of biotin on its carrier protein (BCCP) and then the CO(2) group is transferred by the transcarboxylase to acetyl-CoA to form malonyl-CoA. This is Acetyl-coenzyme A carboxylase carboxyl transferase subunit beta from Pseudomonas fluorescens (strain ATCC BAA-477 / NRRL B-23932 / Pf-5).